The chain runs to 281 residues: Aldo-keto reductase MAP_3007 (281 aa).

The active-site Proton donor is the Tyr-56. The NADPH site is built by Leu-196, Ile-234, Arg-236, Ser-237, Ala-238, Ser-245, and Arg-272.

The protein belongs to the aldo/keto reductase family.

This is Aldo-keto reductase MAP_3007 from Mycolicibacterium paratuberculosis (strain ATCC BAA-968 / K-10) (Mycobacterium paratuberculosis).